A 101-amino-acid polypeptide reads, in one-letter code: ATP-dependent Clp protease adapter protein ClpS (101 aa).

The protein belongs to the ClpS family. In terms of assembly, binds to the N-terminal domain of the chaperone ClpA.

Functionally, involved in the modulation of the specificity of the ClpAP-mediated ATP-dependent protein degradation. The sequence is that of ATP-dependent Clp protease adapter protein ClpS from Treponema denticola (strain ATCC 35405 / DSM 14222 / CIP 103919 / JCM 8153 / KCTC 15104).